We begin with the raw amino-acid sequence, 158 residues long: Protein Smg homolog (158 aa).

The protein belongs to the Smg family.

The chain is Protein Smg homolog from Vibrio atlanticus (strain LGP32) (Vibrio splendidus (strain Mel32)).